Reading from the N-terminus, the 91-residue chain is UPF0386 protein CC_0226 (91 aa).

It belongs to the UPF0386 family.

This is UPF0386 protein CC_0226 from Caulobacter vibrioides (strain ATCC 19089 / CIP 103742 / CB 15) (Caulobacter crescentus).